The chain runs to 57 residues: Large ribosomal subunit protein bL32 (57 aa).

It belongs to the bacterial ribosomal protein bL32 family.

The protein is Large ribosomal subunit protein bL32 of Corynebacterium glutamicum (strain R).